Consider the following 309-residue polypeptide: Carbamate kinase 3 (309 aa).

The protein belongs to the carbamate kinase family.

It is found in the cytoplasm. It carries out the reaction hydrogencarbonate + NH4(+) + ATP = carbamoyl phosphate + ADP + H2O + H(+). The protein operates within metabolic intermediate metabolism; carbamoyl phosphate degradation; CO(2) and NH(3) from carbamoyl phosphate: step 1/1. The polypeptide is Carbamate kinase 3 (arcC3) (Staphylococcus aureus (strain USA300)).